Here is a 500-residue protein sequence, read N- to C-terminus: Type-2 serine--tRNA ligase (500 aa).

Ala305 is an L-serine binding site. Residue Cys307 participates in Zn(2+) binding. Arg337 provides a ligand contact to L-serine. ATP contacts are provided by residues 337–339 and 348–349; these read RYE and RV. Residues 354–356 and Gln401 contribute to the L-serine site; that span reads RIE. Glu356 lines the Zn(2+) pocket. An ATP-binding site is contributed by Glu430. L-serine is bound at residue Asn433. Cys459 lines the Zn(2+) pocket. An ATP-binding site is contributed by Arg466.

The protein belongs to the class-II aminoacyl-tRNA synthetase family. Type-2 seryl-tRNA synthetase subfamily. As to quaternary structure, homodimer. Zn(2+) serves as cofactor.

The protein localises to the cytoplasm. The catalysed reaction is tRNA(Ser) + L-serine + ATP = L-seryl-tRNA(Ser) + AMP + diphosphate + H(+). It catalyses the reaction tRNA(Sec) + L-serine + ATP = L-seryl-tRNA(Sec) + AMP + diphosphate + H(+). Its pathway is aminoacyl-tRNA biosynthesis; selenocysteinyl-tRNA(Sec) biosynthesis; L-seryl-tRNA(Sec) from L-serine and tRNA(Sec): step 1/1. In terms of biological role, catalyzes the attachment of serine to tRNA(Ser). Is also able to aminoacylate tRNA(Sec) with serine, to form the misacylated tRNA L-seryl-tRNA(Sec), which will be further converted into selenocysteinyl-tRNA(Sec). The sequence is that of Type-2 serine--tRNA ligase from Methanothrix thermoacetophila (strain DSM 6194 / JCM 14653 / NBRC 101360 / PT) (Methanosaeta thermophila).